The primary structure comprises 118 residues: Membrane-anchored ubiquitin-fold protein 3 (118 aa).

The 67-residue stretch at isoleucine 7–cysteine 73 folds into the Ubiquitin-like domain. Cysteine 113 carries S-palmitoyl cysteine lipidation. Residue cysteine 115 is modified to Cysteine methyl ester. The S-geranylgeranyl cysteine moiety is linked to residue cysteine 115. The propeptide at threonine 116–leucine 118 is removed in mature form.

Ubiquitous, but three fold higher expression in senescing leaves.

It localises to the cell membrane. May serve as docking site to facilitate the association of other proteins to the plasma membrane. This is Membrane-anchored ubiquitin-fold protein 3 (MUB3) from Arabidopsis thaliana (Mouse-ear cress).